The sequence spans 578 residues: V-type ATP synthase alpha chain (578 aa).

228-235 is a binding site for ATP; it reads GPFGSGKT.

It belongs to the ATPase alpha/beta chains family.

It carries out the reaction ATP + H2O + 4 H(+)(in) = ADP + phosphate + 5 H(+)(out). In terms of biological role, produces ATP from ADP in the presence of a proton gradient across the membrane. The V-type alpha chain is a catalytic subunit. In Thermus thermophilus (strain ATCC BAA-163 / DSM 7039 / HB27), this protein is V-type ATP synthase alpha chain.